A 3564-amino-acid chain; its full sequence is Sushi, von Willebrand factor type A, EGF and pentraxin domain-containing protein 1 (3564 aa).

The first 17 residues, 1–17 (MWTRLAFCCWALALVSG), serve as a signal peptide directing secretion. Positions 84–265 (ELVFLVDESS…LARRALHEDL (182 aa)) constitute a VWFA domain. An N-linked (GlcNAc...) asparagine glycan is attached at Asn-187. 3 Sushi domains span residues 377 to 436 (VHCP…FCRV), 437 to 496 (RTCP…RCVE), and 497 to 561 (RHCA…VCKD). Cystine bridges form between Cys-379/Cys-421, Cys-407/Cys-434, Cys-439/Cys-481, Cys-467/Cys-494, Cys-499/Cys-544, and Cys-530/Cys-559. HYR domains lie at 560 to 644 (KDVE…KVID) and 645 to 724 (VEPP…VIKG). In terms of domain architecture, Sushi 4 spans 725–789 (SPCEVPFTPV…YSTEWPDCAI (65 aa)). Intrachain disulfides connect Cys-727–Cys-769, Cys-753–Cys-787, Cys-1192–Cys-1203, Cys-1197–Cys-1212, Cys-1214–Cys-1223, Cys-1230–Cys-1241, Cys-1235–Cys-1250, Cys-1252–Cys-1261, Cys-1268–Cys-1279, Cys-1273–Cys-1288, Cys-1290–Cys-1299, Cys-1306–Cys-1317, Cys-1311–Cys-1326, Cys-1328–Cys-1337, Cys-1344–Cys-1355, Cys-1349–Cys-1364, Cys-1366–Cys-1375, Cys-1382–Cys-1393, Cys-1387–Cys-1402, and Cys-1404–Cys-1413. Residues 1188-1224 (VFHECFLNPCHNSGTCQQLGRGYVCLCPPGYTGLKCE) enclose the EGF-like 1 domain. The 37-residue stretch at 1226–1262 (DIDECSSLPCLNGGICRDKVGGFTCECSSGYTGQICE) folds into the EGF-like 2; calcium-binding domain. Residues 1264-1300 (NINECSSSPCLNKGTCTDGLASYRCTCVSGYVGVHCE) form the EGF-like 3; calcium-binding domain. Residues 1302 to 1338 (DVNECQSSPCLNNAVCKDQVGGFSCKCPPGFLGTRCE) form the EGF-like 4; calcium-binding domain. The 37-residue stretch at 1340 to 1376 (NVDECLSQPCQNGATCKDGANSFRCQCPAGFTGPHCE) folds into the EGF-like 5; calcium-binding domain. In terms of domain architecture, EGF-like 6; calcium-binding spans 1378–1414 (NINECQSNPCRNQATCVDELNSYSCKCRPGFSGRRCE). In terms of domain architecture, Pentraxin (PTX) spans 1419-1623 (SGFNLDFEVS…VKVDSSSIFC (205 aa)). Sushi domains lie at 1624-1682 (SDCP…HCER) and 1683-1740 (IRCG…SCLD). Intrachain disulfides connect Cys-1626–Cys-1667, Cys-1653–Cys-1680, Cys-1685–Cys-1725, Cys-1711–Cys-1738, Cys-1744–Cys-1756, Cys-1750–Cys-1765, Cys-1767–Cys-1778, Cys-1784–Cys-1824, Cys-1810–Cys-1837, Cys-1842–Cys-1882, Cys-1868–Cys-1895, Cys-1900–Cys-1940, Cys-1926–Cys-1953, Cys-1958–Cys-1998, Cys-1984–Cys-2011, Cys-2016–Cys-2056, Cys-2042–Cys-2073, Cys-2078–Cys-2121, Cys-2107–Cys-2136, Cys-2141–Cys-2181, Cys-2167–Cys-2194, Cys-2199–Cys-2240, Cys-2226–Cys-2254, Cys-2259–Cys-2299, Cys-2285–Cys-2313, Cys-2318–Cys-2358, Cys-2344–Cys-2371, Cys-2376–Cys-2417, Cys-2403–Cys-2430, Cys-2435–Cys-2475, Cys-2461–Cys-2488, Cys-2493–Cys-2533, Cys-2519–Cys-2546, Cys-2551–Cys-2591, and Cys-2577–Cys-2603. The region spanning 1740–1779 (DVDECAVGSDCSEHASCLNTNGSYICSCKPPYTGDGKNCA) is the EGF-like 7; calcium-binding domain. An N-linked (GlcNAc...) asparagine glycan is attached at Asn-1760. Sushi domains follow at residues 1776 to 1839 (KNCA…SCEA), 1840 to 1897 (ISCG…VCEL), 1898 to 1955 (VKCS…SCQL), 1956 to 2013 (VSCG…QCLA), 2014 to 2075 (VSCD…RCIA), 2076 to 2138 (HFCE…QCIP), 2139 to 2196 (VRCG…TCHP), 2197 to 2256 (VSCN…SCTP), 2257 to 2315 (LNCG…KCVP), 2316 to 2373 (TKCA…VCKL), 2374 to 2432 (VLCQ…ECVP), 2433 to 2490 (VECP…MCRP), 2491 to 2548 (IECP…SCNA), and 2549 to 2605 (IHCS…TCVP). Residues 2634 to 2641 (DMMEVPYL) form an important for the interaction with integrin ITGA9:ITGB1 region. Sushi domains lie at 2659–2708 (EESL…SCIS), 2709–2766 (IECD…RCEV), 2767–2824 (ISCS…VCLP), 2825–2882 (VDCG…SCVP), 2883–2940 (VRCP…ICKP), 2941–2998 (ATCG…SCLP), 2999–3054 (CTCS…LCEH), 3055–3112 (ADCG…TCEP), 3113–3171 (VSCG…NCSP), 3172–3231 (KTCP…SCIP), 3232–3289 (VVCG…VCRE), 3290–3347 (SRCE…LCKP), 3348–3406 (NPCP…RCEK), and 3407–3463 (ISCG…ICRA). Disulfide bonds link Cys-2679–Cys-2706, Cys-2711–Cys-2751, Cys-2737–Cys-2764, Cys-2769–Cys-2809, Cys-2795–Cys-2822, Cys-2827–Cys-2867, Cys-2853–Cys-2880, Cys-2885–Cys-2925, Cys-2911–Cys-2938, Cys-2943–Cys-2983, Cys-2969–Cys-2996, Cys-3001–Cys-3040, Cys-3026–Cys-3052, Cys-3057–Cys-3097, Cys-3083–Cys-3110, Cys-3115–Cys-3156, Cys-3141–Cys-3169, Cys-3174–Cys-3214, Cys-3200–Cys-3229, Cys-3234–Cys-3274, Cys-3260–Cys-3287, Cys-3292–Cys-3332, Cys-3318–Cys-3345, Cys-3350–Cys-3391, Cys-3377–Cys-3404, Cys-3409–Cys-3449, Cys-3435–Cys-3461, Cys-3497–Cys-3507, Cys-3501–Cys-3513, Cys-3515–Cys-3524, Cys-3529–Cys-3539, Cys-3533–Cys-3545, and Cys-3547–Cys-3556. 2 consecutive EGF-like domains span residues 3493-3525 (EEPI…SRCH) and 3526-3557 (TATC…HDCS).

Interacts (via Sushi domain 21) with ITGA9:ITGB1; thereby inhibits Ca(2+) intracellular signaling and as a result represses vasocontraction. Interacts (via Sushi domain 21) with ITGA4:ITGB1; thereby inhibits Ca(2+) intracellular signaling and as a result represses vasocontraction. Interacts with ANGPT1 and ANGPT2. Interacts with PEAR1 (via extracellular domain). Interacts with HSPG2, TLN1, FN1, COPA, CCT2, IQGAP1, LAMC1 and NID1. Interacts (via C-terminus) with TIE1.

The protein resides in the secreted. It localises to the nucleus. The protein localises to the cytoplasm. Its subcellular location is the membrane. Required for morphological development, cell alignment and migration of lymphatic endothelial cells during embryonic development, potentially via modulation of ANGPT2-TIE1 signaling and subsequent activation of FOXC2 transcription. Required for embryonic lymphatic vascular development, via mediating the correct formation of the first lymphovenous contact site and tight association of the lymphatic endothelium with the venous endothelium. Represses PRKCA-mediated L-type voltage-gated channel Ca(2+) influx and ROCK-mediated calcium sensitivity in vascular smooth muscle cells, via its interaction with integrins, thereby inhibiting vasocontraction. Promotes platelet activation, via its interaction with PEAR1 and subsequent activation of AKT/mTOR signaling. Plays a role in epidermal development and keratinocyte differentiation, independent of cell-cell adhesion. May play a role in initial cell attachment of stromal osteogenic cells. May promote myoblast cell adhesion when in the presence of integrin ITGA9:ITGB1. The polypeptide is Sushi, von Willebrand factor type A, EGF and pentraxin domain-containing protein 1 (Svep1) (Rattus norvegicus (Rat)).